The following is a 466-amino-acid chain: 5-hydroxytryptamine receptor (466 aa).

The segment at 1–21 (MNASRLPGFNDTSQDQPYPTS) is disordered. Residues 1–66 (MNASRLPGFN…TSFVLMAVTS (66 aa)) are Extracellular-facing. N-linked (GlcNAc...) asparagine glycosylation is found at asparagine 2, asparagine 10, asparagine 29, asparagine 41, asparagine 45, and asparagine 50. Residues 10–21 (NDTSQDQPYPTS) are compositionally biased toward polar residues. A helical membrane pass occupies residues 67–89 (VVLALIILATIVGNVFVIAAIII). Residues 90–99 (ERNLQNVANY) lie on the Cytoplasmic side of the membrane. Residues 100 to 121 (LVASLAVADLMVACLVMPLGAV) form a helical membrane-spanning segment. Over 122 to 136 (YEVSQGWILGPELCD) the chain is Extracellular. Cysteine 135 and cysteine 215 form a disulfide bridge. Residues 137 to 158 (MWTSSDVLCSSASILHLVAIAT) form a helical membrane-spanning segment. Over 159–177 (DRYWAVTDVDYIHIRNEKR) the chain is Cytoplasmic. Residues 178 to 200 (IFTMIVLVWGAALVVSLAPQLGW) form a helical membrane-spanning segment. The Extracellular segment spans residues 201–228 (KDPDYLARITQQQKCLVSQDLAYQIFAT). A helical membrane pass occupies residues 229-250 (MSTFYVPLAVILILYWKIFQTA). The Cytoplasmic portion of the chain corresponds to 251 to 386 (RRRIRRRRDP…AKRERKAAKT (136 aa)). Disordered stretches follow at residues 255-282 (RRRR…QSAR) and 339-360 (VPPS…KPER). Over residues 339-353 (VPPSVSPEKSSSTVT) the composition is skewed to low complexity. Residues 387 to 410 (LAIITGAFVFCWLPFFIMALVMPI) traverse the membrane as a helical segment. Topologically, residues 411–419 (CQTCVISDY) are extracellular. Residues 420 to 442 (LASFFLWLGYFNSTLNPVIYTIF) traverse the membrane as a helical segment. Residues 443 to 466 (SPDFRQAFARILFGTHRRRRYKKF) lie on the Cytoplasmic side of the membrane.

This sequence belongs to the G-protein coupled receptor 1 family.

It localises to the cell membrane. Functionally, this is a receptor for 5-hydroxytryptamine (serotonin), a biogenic hormone that function as a neurotransmitter, a hormone, and a mitogen. The chain is 5-hydroxytryptamine receptor from Heliothis virescens (Tobacco budworm moth).